The following is a 72-amino-acid chain: Mitochondrial import protein 2 (72 aa).

Residues M1 to S22 are disordered. At M1 to Q34 the chain is on the cytoplasmic side. The chain crosses the membrane as a helical span at residues L35–G52. Residues R53–N72 are Mitochondrial intermembrane-facing.

Belongs to the MIM2 family. As to quaternary structure, component of the mitochondrial outer import machinery (MIM) complex containing at least mim1 and mim2. Interacts with mim1. Interacts with mitophagy receptor atg43.

It is found in the mitochondrion outer membrane. Its function is as follows. Component of the mitochondrial outer import machinery (MIM) complex that mediates transport of proteins into mitochondrial compartments. Promotes the insertion of tom70 into the outer mitochondrial membrane. Promotes the insertion of atg43 into the outer mitochondrial membrane. Involved in import of the subset of proteins with multiple alpha-helical transmembrane segments. This chain is Mitochondrial import protein 2, found in Schizosaccharomyces pombe (strain 972 / ATCC 24843) (Fission yeast).